The sequence spans 362 residues: L-asparaginase 2-1 (362 aa).

The first 25 residues, 1–25 (MRSLNTLLLSLFVAMSSGAPLLKIR), serve as a signal peptide directing secretion. Asn29 carries an N-linked (GlcNAc...) asparagine glycan. The region spanning 33–359 (PSIKIFGTGG…DQIRSVFSGV (327 aa)) is the Asparaginase/glutaminase domain. Residue Thr43 is the O-isoaspartyl threonine intermediate of the active site. A substrate-binding site is contributed by Ser89. Residue Asn93 is glycosylated (N-linked (GlcNAc...) asparagine). Substrate is bound at residue 122–123 (TD). An N-linked (GlcNAc...) asparagine glycan is attached at Asn239.

This sequence belongs to the asparaginase 1 family.

The protein localises to the secreted. Its subcellular location is the periplasm. The catalysed reaction is L-asparagine + H2O = L-aspartate + NH4(+). This chain is L-asparaginase 2-1 (ASP3-1), found in Saccharomyces cerevisiae (strain ATCC 204508 / S288c) (Baker's yeast).